The primary structure comprises 81 residues: Putative membrane protein insertion efficiency factor (81 aa).

The segment at Asn61–Glu81 is disordered.

Belongs to the UPF0161 family.

It is found in the cell inner membrane. Could be involved in insertion of integral membrane proteins into the membrane. The sequence is that of Putative membrane protein insertion efficiency factor from Pseudomonas entomophila (strain L48).